The following is a 463-amino-acid chain: Formate-nitrite transporter 2 (463 aa).

Over 1–100 (MCSIPPLRLL…VKKTQLRIDR (100 aa)) the chain is Cytoplasmic. Residues 101–121 (LLLQAFMAGIFVAMAGHCCTV) traverse the membrane as a helical segment. The Extracellular segment spans residues 122-142 (LAGSYPTDPGDPLAVAKPTQK). Residues 143–163 (FIYGALFPVAFICIILTGAEL) form a helical membrane-spanning segment. The Cytoplasmic portion of the chain corresponds to 164-189 (FTGNTMTMLICYFQKRVTMLQLGVNW). The chain crosses the membrane as a helical span at residues 190-210 (LGSLAGNWLGALFGAYFLSYL). The Extracellular segment spans residues 211–237 (TGALGDEHVRQFLFRTCVNKISYGWGE). Residues 238-258 (CFLRGVGCNTFVCLAVWAVIA) form a helical membrane-spanning segment. Over 259–265 (SENVAGK) the chain is Cytoplasmic. The helical transmembrane segment at 266–286 (VLVMWFPIVAFCVGGYEHIIA) threads the bilayer. At 287–305 (NMYTLQAGLMAGAPVAILD) the chain is on the extracellular side. A helical membrane pass occupies residues 306 to 326 (VIAFNFLPTLLGNIVGGCLLV). Residues 327 to 463 (GAVYAYNFYP…QTAESVAQQV (137 aa)) are Cytoplasmic-facing. Residues 424-463 (SGNLSTHARLDLPNRPVEPPSDGLEVTPQSQTAESVAQQV) are disordered. Positions 450-463 (TPQSQTAESVAQQV) are enriched in polar residues.

Belongs to the FNT transporter (TC 1.A.16) family. As to quaternary structure, homopentamer.

The protein localises to the cell membrane. It catalyses the reaction (S)-lactate(in) + H(+)(in) = (S)-lactate(out) + H(+)(out). The catalysed reaction is formate(in) + H(+)(in) = formate(out) + H(+)(out). It carries out the reaction pyruvate(out) + H(+)(out) = pyruvate(in) + H(+)(in). The enzyme catalyses acetate(out) + H(+)(out) = acetate(in) + H(+)(in). Its activity is regulated as follows. Inhibited by p-chloromercuribenzene sulfonate (pCMBS). Methyl methanethiosulfonate (MMTS) inhibits L-lactate but not formate transport. Inhibited by the Malaria Box compound MMV007839. Inhibited by BH-296, BH-317, BH-326 and BH-388 compounds. Its function is as follows. Monocarboxylate-proton symporter; active in acidic-to-neutral pH range. Transports L-lactate and formate. The sequence is that of Formate-nitrite transporter 2 from Toxoplasma gondii (strain ATCC 50611 / Me49).